The chain runs to 216 residues: Cytidylate kinase (216 aa).

Residue 7–15 (GPAASGKGT) coordinates ATP.

This sequence belongs to the cytidylate kinase family. Type 1 subfamily.

The protein resides in the cytoplasm. The catalysed reaction is CMP + ATP = CDP + ADP. It catalyses the reaction dCMP + ATP = dCDP + ADP. In Methylocella silvestris (strain DSM 15510 / CIP 108128 / LMG 27833 / NCIMB 13906 / BL2), this protein is Cytidylate kinase.